Here is a 682-residue protein sequence, read N- to C-terminus: Methionine--tRNA ligase (682 aa).

The 'HIGH' region motif lies at 15–25 (PYANGAIHLGH). Zn(2+)-binding residues include Cys146, Cys149, Cys159, and Cys162. Positions 331 to 335 (KMSKS) match the 'KMSKS' region motif. Lys334 contributes to the ATP binding site. Residues 580–682 (DFAKLDMRVA…SGVTAGMQVK (103 aa)) enclose the tRNA-binding domain.

It belongs to the class-I aminoacyl-tRNA synthetase family. MetG type 1 subfamily. In terms of assembly, homodimer. The cofactor is Zn(2+).

It localises to the cytoplasm. It catalyses the reaction tRNA(Met) + L-methionine + ATP = L-methionyl-tRNA(Met) + AMP + diphosphate. Its function is as follows. Is required not only for elongation of protein synthesis but also for the initiation of all mRNA translation through initiator tRNA(fMet) aminoacylation. The protein is Methionine--tRNA ligase of Haemophilus influenzae (strain ATCC 51907 / DSM 11121 / KW20 / Rd).